The following is a 281-amino-acid chain: Bifunctional protein FolD (281 aa).

NADP(+)-binding positions include glycine 165–glycine 167, threonine 192, and valine 233.

It belongs to the tetrahydrofolate dehydrogenase/cyclohydrolase family. Homodimer.

The catalysed reaction is (6R)-5,10-methylene-5,6,7,8-tetrahydrofolate + NADP(+) = (6R)-5,10-methenyltetrahydrofolate + NADPH. The enzyme catalyses (6R)-5,10-methenyltetrahydrofolate + H2O = (6R)-10-formyltetrahydrofolate + H(+). It functions in the pathway one-carbon metabolism; tetrahydrofolate interconversion. Its function is as follows. Catalyzes the oxidation of 5,10-methylenetetrahydrofolate to 5,10-methenyltetrahydrofolate and then the hydrolysis of 5,10-methenyltetrahydrofolate to 10-formyltetrahydrofolate. The protein is Bifunctional protein FolD of Mycobacterium tuberculosis (strain ATCC 25177 / H37Ra).